A 95-amino-acid chain; its full sequence is Aspartyl/glutamyl-tRNA(Asn/Gln) amidotransferase subunit C (95 aa).

This sequence belongs to the GatC family. In terms of assembly, heterotrimer of A, B and C subunits.

The catalysed reaction is L-glutamyl-tRNA(Gln) + L-glutamine + ATP + H2O = L-glutaminyl-tRNA(Gln) + L-glutamate + ADP + phosphate + H(+). The enzyme catalyses L-aspartyl-tRNA(Asn) + L-glutamine + ATP + H2O = L-asparaginyl-tRNA(Asn) + L-glutamate + ADP + phosphate + 2 H(+). In terms of biological role, allows the formation of correctly charged Asn-tRNA(Asn) or Gln-tRNA(Gln) through the transamidation of misacylated Asp-tRNA(Asn) or Glu-tRNA(Gln) in organisms which lack either or both of asparaginyl-tRNA or glutaminyl-tRNA synthetases. The reaction takes place in the presence of glutamine and ATP through an activated phospho-Asp-tRNA(Asn) or phospho-Glu-tRNA(Gln). This chain is Aspartyl/glutamyl-tRNA(Asn/Gln) amidotransferase subunit C, found in Dehalococcoides mccartyi (strain ATCC BAA-2266 / KCTC 15142 / 195) (Dehalococcoides ethenogenes (strain 195)).